The following is a 198-amino-acid chain: NADH-quinone oxidoreductase subunit C (198 aa).

This sequence belongs to the complex I 30 kDa subunit family. In terms of assembly, NDH-1 is composed of 14 different subunits. Subunits NuoB, C, D, E, F, and G constitute the peripheral sector of the complex.

The protein resides in the cell inner membrane. It carries out the reaction a quinone + NADH + 5 H(+)(in) = a quinol + NAD(+) + 4 H(+)(out). Its function is as follows. NDH-1 shuttles electrons from NADH, via FMN and iron-sulfur (Fe-S) centers, to quinones in the respiratory chain. The immediate electron acceptor for the enzyme in this species is believed to be ubiquinone. Couples the redox reaction to proton translocation (for every two electrons transferred, four hydrogen ions are translocated across the cytoplasmic membrane), and thus conserves the redox energy in a proton gradient. The polypeptide is NADH-quinone oxidoreductase subunit C (Chromobacterium violaceum (strain ATCC 12472 / DSM 30191 / JCM 1249 / CCUG 213 / NBRC 12614 / NCIMB 9131 / NCTC 9757 / MK)).